An 804-amino-acid polypeptide reads, in one-letter code: Phenylalanine--tRNA ligase beta subunit (804 aa).

One can recognise a tRNA-binding domain in the interval 38–148 (RAAFRAFTIA…ENAPVGTSFA (111 aa)). In terms of domain architecture, B5 spans 401-476 (HTARVIDFPV…RIHGINRIDP (76 aa)). Residues D454, D460, E463, and E464 each coordinate Mg(2+). One can recognise an FDX-ACB domain in the interval 710–803 (SLFQSLKRDY…VAKQTGGVLR (94 aa)).

This sequence belongs to the phenylalanyl-tRNA synthetase beta subunit family. Type 1 subfamily. As to quaternary structure, tetramer of two alpha and two beta subunits. The cofactor is Mg(2+).

Its subcellular location is the cytoplasm. The enzyme catalyses tRNA(Phe) + L-phenylalanine + ATP = L-phenylalanyl-tRNA(Phe) + AMP + diphosphate + H(+). This is Phenylalanine--tRNA ligase beta subunit from Brucella abortus (strain 2308).